A 446-amino-acid polypeptide reads, in one-letter code: Delta(8)-fatty-acid desaturase (446 aa).

The Cytochrome b5 heme-binding domain occupies 5 to 89 (KKYISVGELE…LEDYLVSEIS (85 aa)). Heme contacts are provided by His-40 and His-63. 2 helical membrane-spanning segments follow: residues 112–132 (VIYC…GVLC) and 136–156 (LWVH…AAYL). The Histidine box-1 signature appears at 158–162 (HDSGH). A run of 4 helical transmembrane segments spans residues 174-195 (FAQV…KWTH), 253-273 (IYLV…LLLF), 282-302 (ALNI…VSCL), and 309-329 (VLFV…FTLN). The short motif at 195-199 (HNAHH) is the Histidine box-2 element. The Histidine box-3 signature appears at 372–376 (QLEHH).

It belongs to the fatty acid desaturase type 1 family. Fe cation is required as a cofactor. In terms of tissue distribution, expressed only in young leaves.

The protein resides in the membrane. The catalysed reaction is an N-acyl-(4R)-4-hydroxysphinganine + 2 Fe(II)-[cytochrome b5] + O2 + 2 H(+) = a (4R,8E)-4-hydroxysphingenine ceramide + 2 Fe(III)-[cytochrome b5] + 2 H2O. It catalyses the reaction an N-acyl-(4R)-4-hydroxysphinganine + 2 Fe(II)-[cytochrome b5] + O2 + 2 H(+) = a (4R,8Z)-4-hydroxysphing-8-enine ceramide + 2 Fe(III)-[cytochrome b5] + 2 H2O. Functionally, plays a major role as delta(8)-fatty-acid desaturase which introduces a double bond at the 8-position in the long-chain base (LCB) of ceramides with or without a hydroxy group at the 4-position. The enzyme produces both the 8E and 8Z isomers (in a 4:1 ratio). This structural modification contributes to the quantitative partitioning of ceramides between the two major sphingolipid classes, glucosylceramides and glycosylinositolphosphoryl ceramides. Sphingolipids are important membrane components involved in environmental stress responses, such as resistance to chilling, and act as cell signaling molecules. The sequence is that of Delta(8)-fatty-acid desaturase (sld1) from Borago officinalis (Bourrache).